The sequence spans 180 residues: Inner membrane-spanning protein YciB (180 aa).

The next 6 membrane-spanning stretches (helical) occupy residues 4 to 24 (FLSEIGPVIAFFAGFFYGGGI), 25 to 45 (QHATLYMLITSVICITLCYVI), 49 to 69 (VSKLSIISTTVLLVSGSITLI), 76 to 96 (IKIKPTILYVIFGIIFLMSGI), 118 to 138 (ITLSYRTAAFFFFMAVVNEVV), and 150 to 170 (FKVFGVIPITFIFILLQLPLL).

The protein belongs to the YciB family.

Its subcellular location is the cell inner membrane. Its function is as follows. Plays a role in cell envelope biogenesis, maintenance of cell envelope integrity and membrane homeostasis. In Rickettsia rickettsii (strain Iowa), this protein is Inner membrane-spanning protein YciB.